Here is a 223-residue protein sequence, read N- to C-terminus: Type III pantothenate kinase (223 aa).

Asp-17–His-24 provides a ligand contact to ATP. Substrate contacts are provided by residues Tyr-81 and Gly-85 to Arg-88. Asp-87 (proton acceptor) is an active-site residue. Asp-102 serves as a coordination point for K(+). Residue Ser-105 coordinates ATP. Thr-157 is a substrate binding site.

It belongs to the type III pantothenate kinase family. Homodimer. NH4(+) serves as cofactor. The cofactor is K(+).

It is found in the cytoplasm. It carries out the reaction (R)-pantothenate + ATP = (R)-4'-phosphopantothenate + ADP + H(+). Its pathway is cofactor biosynthesis; coenzyme A biosynthesis; CoA from (R)-pantothenate: step 1/5. Its function is as follows. Catalyzes the phosphorylation of pantothenate (Pan), the first step in CoA biosynthesis. In Helicobacter pylori (strain J99 / ATCC 700824) (Campylobacter pylori J99), this protein is Type III pantothenate kinase.